A 170-amino-acid chain; its full sequence is Cytochrome b6-f complex subunit 4 (170 aa).

3 consecutive transmembrane segments (helical) span residues 46 to 66 (LLFM…GLAV), 105 to 125 (LLGI…PFIE), and 141 to 161 (TVFL…TLPL).

The protein belongs to the cytochrome b family. PetD subfamily. In terms of assembly, the 4 large subunits of the cytochrome b6-f complex are cytochrome b6, subunit IV (17 kDa polypeptide, PetD), cytochrome f and the Rieske protein, while the 4 small subunits are PetG, PetL, PetM and PetN. The complex functions as a dimer.

Its subcellular location is the cellular thylakoid membrane. Its function is as follows. Component of the cytochrome b6-f complex, which mediates electron transfer between photosystem II (PSII) and photosystem I (PSI), cyclic electron flow around PSI, and state transitions. This Synechococcus sp. (strain JA-3-3Ab) (Cyanobacteria bacterium Yellowstone A-Prime) protein is Cytochrome b6-f complex subunit 4.